A 367-amino-acid chain; its full sequence is Peptide chain release factor 2 (367 aa).

An N5-methylglutamine modification is found at glutamine 254.

This sequence belongs to the prokaryotic/mitochondrial release factor family. In terms of processing, methylated by PrmC. Methylation increases the termination efficiency of RF2.

It is found in the cytoplasm. In terms of biological role, peptide chain release factor 2 directs the termination of translation in response to the peptide chain termination codons UGA and UAA. The polypeptide is Peptide chain release factor 2 (Variovorax paradoxus (strain S110)).